A 356-amino-acid chain; its full sequence is MSTVTITDLARENVRNLTPYQSARRLGGNGDVWLNANEYPTAVEFKLTQQTLNRYPECQPKAVIENYAQYAGVKPEQVLVSRGADEGIELLIRAFCEPGKDAILYCPPTYGMYSVSAETIGVECRTVPTLENWQLDLQGISDKLDGVKVVYVCSPNNPTGQLINPQDFRTLLELTRGKAIVVADEAYIEFCPQASLAGWLAEYPHLAILRTLSKAFALAGLRCGFTLANEEVINLLMKVIPPYPLSTPVADIAAQALSPQGIVAMSERVAQIITEREYLIAALKEIPCVEQVFDSETNYILARFKASSAVFKSLWDQGIILRDQNKQPSLSGCLRITVGTREESQRVIDALRAEQV.

K214 is modified (N6-(pyridoxal phosphate)lysine).

This sequence belongs to the class-II pyridoxal-phosphate-dependent aminotransferase family. Histidinol-phosphate aminotransferase subfamily. Homodimer. It depends on pyridoxal 5'-phosphate as a cofactor.

The catalysed reaction is L-histidinol phosphate + 2-oxoglutarate = 3-(imidazol-4-yl)-2-oxopropyl phosphate + L-glutamate. Its pathway is amino-acid biosynthesis; L-histidine biosynthesis; L-histidine from 5-phospho-alpha-D-ribose 1-diphosphate: step 7/9. The chain is Histidinol-phosphate aminotransferase from Shigella flexneri serotype 5b (strain 8401).